The primary structure comprises 363 residues: FMNH(2)-dependent dimethylsulfone monooxygenase (363 aa).

Belongs to the SsuD family.

The enzyme catalyses dimethyl sulfone + FMNH2 + O2 = methanesulfinate + FMN + formaldehyde + H2O + 2 H(+). Involved in the dimethyl sulfide degradation pathway. Catalyzes the oxidation of dimethylsulfone (DMSO2) to yield methanesulfinate, which is oxidized spontaneously to methanesulfonate in the presence of dioxygen and FMNH(2). The chain is FMNH(2)-dependent dimethylsulfone monooxygenase from Pseudomonas putida (Arthrobacter siderocapsulatus).